The following is a 212-amino-acid chain: ATP-dependent dethiobiotin synthetase BioD (212 aa).

13–18 (GIGKTV) lines the ATP pocket. Position 17 (Thr-17) interacts with Mg(2+). The active site involves Lys-33. Position 37 (Ser-37) interacts with substrate. Glu-100 provides a ligand contact to Mg(2+). ATP contacts are provided by residues 100–103 (EGAG) and 184–186 (PRL).

It belongs to the dethiobiotin synthetase family. Homodimer. It depends on Mg(2+) as a cofactor.

It is found in the cytoplasm. It catalyses the reaction (7R,8S)-7,8-diammoniononanoate + CO2 + ATP = (4R,5S)-dethiobiotin + ADP + phosphate + 3 H(+). Its pathway is cofactor biosynthesis; biotin biosynthesis; biotin from 7,8-diaminononanoate: step 1/2. Its function is as follows. Catalyzes a mechanistically unusual reaction, the ATP-dependent insertion of CO2 between the N7 and N8 nitrogen atoms of 7,8-diaminopelargonic acid (DAPA, also called 7,8-diammoniononanoate) to form a ureido ring. This is ATP-dependent dethiobiotin synthetase BioD from Rhodopseudomonas palustris (strain TIE-1).